A 379-amino-acid chain; its full sequence is Cytochrome b (379 aa).

4 consecutive transmembrane segments (helical) span residues 33-53, 77-98, 113-133, and 178-198; these read FGSL…FLAM, WLIR…YLHI, WNIG…GYVL, and FFAF…IHLL. Heme b-binding residues include histidine 83 and histidine 97. Heme b is bound by residues histidine 182 and histidine 196. An a ubiquinone-binding site is contributed by histidine 201. The next 4 helical transmembrane spans lie at 226 to 246, 288 to 308, 320 to 340, and 347 to 367; these read YKDL…ALFY, LGGV…PILH, ASQL…WIGG, and YIII…VLNP.

It belongs to the cytochrome b family. As to quaternary structure, the cytochrome bc1 complex contains 3 respiratory subunits (MT-CYB, CYC1 and UQCRFS1), 2 core proteins (UQCRC1 and UQCRC2) and probably 6 low-molecular weight proteins. Heme b serves as cofactor.

It localises to the mitochondrion inner membrane. In terms of biological role, component of the ubiquinol-cytochrome c reductase complex (complex III or cytochrome b-c1 complex) that is part of the mitochondrial respiratory chain. The b-c1 complex mediates electron transfer from ubiquinol to cytochrome c. Contributes to the generation of a proton gradient across the mitochondrial membrane that is then used for ATP synthesis. The polypeptide is Cytochrome b (mt-cyb) (Anguilla interioris (Highlands long-finned eel)).